A 399-amino-acid polypeptide reads, in one-letter code: Fructose-1,6-bisphosphate aldolase/phosphatase (399 aa).

The active-site Proton acceptor; for FBP phosphatase activity is aspartate 11. Aspartate 11, histidine 18, aspartate 52, and aspartate 53 together coordinate Mg(2+). Histidine 18 contributes to the beta-D-fructose 1,6-bisphosphate binding site. Histidine 18 contacts dihydroxyacetone phosphate. Tyrosine 91 is a binding site for beta-D-fructose 1,6-bisphosphate. Glutamine 95 provides a ligand contact to Mg(2+). Glycine 104–asparagine 105 is a beta-D-fructose 1,6-bisphosphate binding site. Aspartate 132 serves as a coordination point for Mg(2+). Lysine 133 provides a ligand contact to beta-D-fructose 1,6-bisphosphate. Lysine 133 contacts dihydroxyacetone phosphate. Tyrosine 229 (proton donor/acceptor; for FBP aldolase activity) is an active-site residue. Lysine 232, aspartate 233, and aspartate 234 together coordinate Mg(2+). The active-site Schiff-base intermediate with DHAP; for FBP aldolase activity is the lysine 232. Beta-D-fructose 1,6-bisphosphate contacts are provided by residues glutamine 242–serine 243, arginine 266, aspartate 297, and tyrosine 358. Residues arginine 266 and aspartate 297 each contribute to the dihydroxyacetone phosphate site.

This sequence belongs to the FBP aldolase/phosphatase family. In terms of assembly, homooctamer; dimer of tetramers. The cofactor is Mg(2+).

The catalysed reaction is beta-D-fructose 1,6-bisphosphate + H2O = beta-D-fructose 6-phosphate + phosphate. It carries out the reaction beta-D-fructose 1,6-bisphosphate = D-glyceraldehyde 3-phosphate + dihydroxyacetone phosphate. Its pathway is carbohydrate biosynthesis; gluconeogenesis. Its function is as follows. Catalyzes two subsequent steps in gluconeogenesis: the aldol condensation of dihydroxyacetone phosphate (DHAP) and glyceraldehyde-3-phosphate (GA3P) to fructose-1,6-bisphosphate (FBP), and the dephosphorylation of FBP to fructose-6-phosphate (F6P). This chain is Fructose-1,6-bisphosphate aldolase/phosphatase, found in Pyrobaculum neutrophilum (strain DSM 2338 / JCM 9278 / NBRC 100436 / V24Sta) (Thermoproteus neutrophilus).